Here is a 413-residue protein sequence, read N- to C-terminus: Putative competence-damage inducible protein (413 aa).

The protein belongs to the CinA family.

This chain is Putative competence-damage inducible protein, found in Thermoanaerobacter sp. (strain X514).